A 100-amino-acid polypeptide reads, in one-letter code: PMETRFSFICISEEFKFKVRDALESAGLGNIIITYTNSSDREELMEVIENSDVIITSPGRYKELYEINNGRRQIINFLYSLDDGSVKALKSKLLEIKYSK.

This is an uncharacterized protein from Clostridium tetanomorphum.